The following is a 327-amino-acid chain: MEAIKGSDVNVPDAVFAWMLDGRGGVKPLENTDVIDEAHPCWLHLNYVHHESAQWLATTPLLPNNVRDALAGESTRPRVSRLGEGTLITLRCINGSTDERPDQLVAMRVYMDGRLIVSTRQRKVLALDDVVSDLEEGTGPTDCGGWLVDVCDALTDHSSEFIEQLHDKIIDLEDNLLDQQIPPRGFLALLRKQLIVMRRYMAPQRDVYARLASERLPWMSDDQRRRMQDIADRLGRGLDEIDACIARTGVMADEIAQVMQENLARRTYTMSLMAMVFLPSTFLTGLFGVNLGGIPGGGWQFGFSIFCILLVVLIGGVALWLHRSKWL.

Over 1–273 (MEAIKGSDVN…ARRTYTMSLM (273 aa)) the chain is Cytoplasmic. Residues 274-294 (AMVFLPSTFLTGLFGVNLGGI) traverse the membrane as a helical segment. The Periplasmic segment spans residues 295 to 300 (PGGGWQ). The helical transmembrane segment at 301–321 (FGFSIFCILLVVLIGGVALWL) threads the bilayer. The Cytoplasmic portion of the chain corresponds to 322–327 (HRSKWL).

Belongs to the CorA metal ion transporter (MIT) (TC 1.A.35) family.

Its subcellular location is the cell inner membrane. The enzyme catalyses Zn(2+)(out) + H(+)(out) = Zn(2+)(in) + H(+)(in). Functionally, zinc transporter. Acts as a Zn(2+):proton symporter, which likely mediates zinc ion uptake. The chain is Zinc transport protein ZntB from Escherichia coli O8 (strain IAI1).